The sequence spans 391 residues: tRNA-specific 2-thiouridylase MnmA (391 aa).

ATP contacts are provided by residues 20–27 (AMSGGVDS) and Leu46. Cys114 (nucleophile) is an active-site residue. Cys114 and Cys210 are disulfide-bonded. Gly138 contributes to the ATP binding site. An interaction with tRNA region spans residues 160 to 162 (RDQ). Catalysis depends on Cys210, which acts as the Cysteine persulfide intermediate.

Belongs to the MnmA/TRMU family.

The protein resides in the cytoplasm. It carries out the reaction S-sulfanyl-L-cysteinyl-[protein] + uridine(34) in tRNA + AH2 + ATP = 2-thiouridine(34) in tRNA + L-cysteinyl-[protein] + A + AMP + diphosphate + H(+). Catalyzes the 2-thiolation of uridine at the wobble position (U34) of tRNA, leading to the formation of s(2)U34. The chain is tRNA-specific 2-thiouridylase MnmA from Bartonella bacilliformis (strain ATCC 35685 / KC583 / Herrer 020/F12,63).